We begin with the raw amino-acid sequence, 76 residues long: Putative membrane protein insertion efficiency factor (76 aa).

This sequence belongs to the UPF0161 family.

It is found in the cell inner membrane. Its function is as follows. Could be involved in insertion of integral membrane proteins into the membrane. In Paraburkholderia phymatum (strain DSM 17167 / CIP 108236 / LMG 21445 / STM815) (Burkholderia phymatum), this protein is Putative membrane protein insertion efficiency factor.